The following is a 149-amino-acid chain: Chromophore lyase CpcS/CpeS homolog (149 aa).

The protein belongs to the CpcS/CpeS biliprotein lyase family.

Its subcellular location is the plastid. It localises to the chloroplast. Functionally, might function to covalently attach a chromophore to Cys residue(s) of phycobiliproteins. The protein is Chromophore lyase CpcS/CpeS homolog of Pyropia yezoensis (Susabi-nori).